The chain runs to 1469 residues: Accumulation-associated protein (1469 aa).

An N-terminal signal peptide occupies residues 1–52 (MGKRRQGPINKKVDFLPNKLNKYSIRKFTVGTASILLGSTLIFGSSSHEAKA). Disordered stretches follow at residues 52-164 (AAEE…SEPV), 486-511 (GIET…TPTT), and 528-1443 (EIKP…QANE). 2 stretches are compositionally biased toward polar residues: residues 75–94 (ENTN…STLQ) and 110–125 (KANS…SEAP). Positions 129-144 (DLARKEDIPAVSKNEE) are enriched in basic and acidic residues. A compositionally biased stretch (polar residues) spans 145 to 164 (LQSSQPNTDSKIEPTTSEPV). 7 G5 domains span residues 446–528 (PKAV…GGEE), 574–656 (YGPV…GGEE), 702–784 (YGPV…GGEE), 830–912 (YGPV…GGEE), 958–1040 (YGPV…GGEE), 1086–1168 (YGPV…GGEQ), and 1211–1296 (VTKY…GPTK). Residues 489–500 (TTTTPTYVNPNT) show a composition bias toward low complexity. Basic and acidic residues-rich tracts occupy residues 528 to 537 (EIKPGHKDEF) and 589 to 613 (PFDK…KGEP). The span at 614 to 629 (GTKTITTPTTKNPLTG) shows a compositional bias: low complexity. Basic and acidic residues-rich tracts occupy residues 631–646 (KVGE…KQPV) and 655–665 (EEIKPGHKDEF). Over residues 738-757 (KGEPGTKTITTPTTKNPLTG) the composition is skewed to low complexity. 2 stretches are compositionally biased toward basic and acidic residues: residues 759–793 (KVGE…KDEF) and 845–869 (PFDK…KGEP). Positions 870–885 (GTKTITTPTTKNPLTG) are enriched in low complexity. The segment covering 887–921 (KVGEGEPTEKVTKQPVDEIVHYGGEEIKPGHKDEF) has biased composition (basic and acidic residues). Low complexity predominate over residues 994-1013 (KGEPGTKTITTPTTKNPLTG). The segment covering 1015 to 1049 (KVGEGEPTEKITKQPVDEIVHYGGEEIKPGHKDEF) has biased composition (basic and acidic residues). Low complexity predominate over residues 1122 to 1141 (KGEPGTKTITTPTTKNPLTG). Composition is skewed to basic and acidic residues over residues 1143–1162 (KVGE…DEIV), 1229–1253 (PFDK…KGEP), and 1271–1286 (KVGE…KQPV). Residues 1409-1443 (TPTQSGAPEQPNRSMHSTDNKNQLPDTGENRQANE) are compositionally biased toward polar residues. Residues 1432–1436 (LPDTG) carry the LPXTG sorting signal motif. The residue at position 1435 (T1435) is a Pentaglycyl murein peptidoglycan amidated threonine. A propeptide spans 1436-1469 (GENRQANEGTLVGSLLAIVGSLFIFGRRKKGNEK) (removed by sortase).

It is found in the secreted. Its subcellular location is the cell wall. The chain is Accumulation-associated protein from Staphylococcus epidermidis (strain ATCC 12228 / FDA PCI 1200).